Consider the following 469-residue polypeptide: 6-phosphofructo-2-kinase/fructose-2,6-bisphosphatase 4 (469 aa).

Positions 1 to 249 (MASPRELTQN…YYLMNIHVTP (249 aa)) are 6-phosphofructo-2-kinase. Phosphoserine; by PKC is present on S29. 46–54 (GLPARGKTY) provides a ligand contact to ATP. Beta-D-fructose 6-phosphate is bound by residues R79 and R103. The active site involves D129. Positions 131 and 137 each coordinate beta-D-fructose 6-phosphate. Residue C159 is part of the active site. An ATP-binding site is contributed by 168-173 (NIVQVK). Positions 173, 194, and 198 each coordinate beta-D-fructose 6-phosphate. Residues 250-469 (RSIYLCRHGE…EALVTVPAHQ (220 aa)) are fructose-2,6-bisphosphatase. Residue R256 coordinates beta-D-fructose 2,6-bisphosphate. H257 acts as the Tele-phosphohistidine intermediate in catalysis. The beta-D-fructose 2,6-bisphosphate site is built by N263, G269, and R306. The active-site Proton donor/acceptor is E326. The beta-D-fructose 2,6-bisphosphate site is built by Y337, R351, K355, Y366, Q392, and R396. 348–351 (FALR) is an ATP binding site. ATP contacts are provided by residues 392–396 (QAVMR) and Y428. Phosphothreonine; by PKC is present on T444.

The protein in the C-terminal section; belongs to the phosphoglycerate mutase family. In terms of assembly, homodimer. In terms of tissue distribution, testis.

It catalyses the reaction beta-D-fructose 2,6-bisphosphate + H2O = beta-D-fructose 6-phosphate + phosphate. It carries out the reaction beta-D-fructose 6-phosphate + ATP = beta-D-fructose 2,6-bisphosphate + ADP + H(+). The most important regulatory mechanism of these opposing activities is by phosphorylation and dephosphorylation of the enzyme. Its function is as follows. Synthesis and degradation of fructose 2,6-bisphosphate. This is 6-phosphofructo-2-kinase/fructose-2,6-bisphosphatase 4 (Pfkfb4) from Rattus norvegicus (Rat).